The following is a 1256-amino-acid chain: Cohesin subunit SA-3 (1256 aa).

Over residues 1-22 (MPTLWSPSTQHHGSSSGSMSSP) the composition is skewed to low complexity. A disordered region spans residues 1-110 (MPTLWSPSTQ…GGNDKNKSVP (110 aa)). Basic residues predominate over residues 72 to 83 (RNVRKRAAKRPP). Residues 324 to 409 (FVHRYRDILP…NRFKDRMVSM (86 aa)) enclose the SCD domain. Disordered regions lie at residues 1096 to 1169 (RRLQ…GPEL) and 1230 to 1256 (KLLH…MEDF). Polar residues predominate over residues 1113-1125 (NSGPTTPTLTSTA). Basic residues predominate over residues 1126-1140 (VKRRQSPRTVGKRQK). The segment covering 1144–1166 (GPGPGPGPGPGPGPGPGPGPGPG) has biased composition (pro residues). S1234 is modified (phosphoserine).

This sequence belongs to the SCC3 family. In terms of assembly, component of the meiosis-specific cohesin complex, which also contains the SMC1 (SMC1A or SMC1B) and SMC3 heterodimer. Such complex likely contains RAD21, or the meiosis-specific related protein REC8. Interacts with CCDC79/TERB1; recruiting cohesin to telomeres to develop structural rigidity. In terms of processing, phosphorylated. In terms of tissue distribution, testis specific.

The protein resides in the nucleus. It is found in the chromosome. In terms of biological role, meiosis specific component of cohesin complex. The cohesin complex is required for the cohesion of sister chromatids after DNA replication. The cohesin complex apparently forms a large proteinaceous ring within which sister chromatids can be trapped. At anaphase, the complex is cleaved and dissociates from chromatin, allowing sister chromatids to segregate. The meiosis-specific cohesin complex probably replaces mitosis specific cohesin complex when it dissociates from chromatin during prophase I. This Rattus norvegicus (Rat) protein is Cohesin subunit SA-3 (Stag3).